Consider the following 497-residue polypeptide: Putative zinc finger and SCAN domain-containing protein 5D (497 aa).

The SCAN box domain maps to 41–123 (KAGRRMFSCP…DLLRNNRRPK (83 aa)). Residues 148 to 342 (PASVRDDPRG…GPAGAVSHPN (195 aa)) are disordered. Residues 158–167 (VSSQRASSVN) are compositionally biased toward polar residues. Composition is skewed to basic and acidic residues over residues 216–229 (PTLE…REEN) and 249–259 (KEGKEPKKRAS). 5 consecutive C2H2-type zinc fingers follow at residues 352 to 374 (FACG…MRSH), 380 to 402 (FQCN…QRIH), 408 to 430 (YTCD…KRSH), 436 to 458 (YKCK…KLIH), and 464 to 486 (YKCP…QKTH).

The protein localises to the nucleus. The sequence is that of Putative zinc finger and SCAN domain-containing protein 5D from Homo sapiens (Human).